Here is a 153-residue protein sequence, read N- to C-terminus: MKKIQLFTDGSCLGNPGPGGYGAVMIYNEHCKELSEGFLLTTNNRMEMLACIKALQSLTEPCEVELTTDSQYVRQGITLWIHNWKKRGWKTAAKAPVKNVDLWKALDAAQEKHKVAWHWVKGHSGHPENERCDDLARRAAENNPTQEDIGYEG.

The RNase H type-1 domain maps to 1 to 141; the sequence is MKKIQLFTDG…CDDLARRAAE (141 aa). Positions 9, 47, 69, and 133 each coordinate Mg(2+).

It belongs to the RNase H family. In terms of assembly, monomer. Mg(2+) serves as cofactor.

It localises to the cytoplasm. The enzyme catalyses Endonucleolytic cleavage to 5'-phosphomonoester.. Functionally, endonuclease that specifically degrades the RNA of RNA-DNA hybrids. The sequence is that of Ribonuclease H from Psychromonas ingrahamii (strain DSM 17664 / CCUG 51855 / 37).